The following is a 572-amino-acid chain: Probable terpene synthase 11 (572 aa).

Mg(2+) contacts are provided by Asp-317, Asp-321, and Glu-469. A DDXXD motif motif is present at residues 317 to 321 (DDIFD).

It belongs to the terpene synthase family. Mg(2+) is required as a cofactor.

Its function is as follows. Probable sesquiterpene synthase. This Ricinus communis (Castor bean) protein is Probable terpene synthase 11 (TPS11).